We begin with the raw amino-acid sequence, 418 residues long: Glutamyl-tRNA reductase (418 aa).

Substrate is bound by residues 49–52 (TCNR), S109, 114–116 (EPQ), and Q120. The active-site Nucleophile is C50. NADP(+) is bound at residue 189–194 (GAGETI).

It belongs to the glutamyl-tRNA reductase family. As to quaternary structure, homodimer.

The enzyme catalyses (S)-4-amino-5-oxopentanoate + tRNA(Glu) + NADP(+) = L-glutamyl-tRNA(Glu) + NADPH + H(+). The protein operates within porphyrin-containing compound metabolism; protoporphyrin-IX biosynthesis; 5-aminolevulinate from L-glutamyl-tRNA(Glu): step 1/2. In terms of biological role, catalyzes the NADPH-dependent reduction of glutamyl-tRNA(Glu) to glutamate 1-semialdehyde (GSA). In Enterobacter sp. (strain 638), this protein is Glutamyl-tRNA reductase.